Reading from the N-terminus, the 359-residue chain is Probable C-C chemokine receptor type 3 (359 aa).

Residues 1-38 (MAFNTDEIKTVVESFETTPYEYEWAPPCEKVRIKELGS) lie on the Extracellular side of the membrane. A helical transmembrane segment spans residues 39-64 (WLLPPLYSLVFIIGLLGNMMVVLILI). Residues 65 to 68 (KYRK) lie on the Cytoplasmic side of the membrane. The chain crosses the membrane as a helical span at residues 69-95 (LQIMTNIYLFNLAISDLLFLFTVPFWI). Topologically, residues 96-111 (HYVLWNEWGFGHYMCK) are extracellular. A disulfide bridge links cysteine 110 with cysteine 187. A helical membrane pass occupies residues 112 to 133 (MLSGFYYLALYSEIFFIILLTI). Topologically, residues 134 to 150 (DRYLAIVHAVFALRART) are cytoplasmic. The helical transmembrane segment at 151–175 (VTFATITSIITWGLAGLAALPEFIF) threads the bilayer. Residues 176-201 (HESQDSFGEFSCSPRYPEGEEDSWKR) lie on the Extracellular side of the membrane. The chain crosses the membrane as a helical span at residues 202 to 227 (FHALRMNIFGLALPLLIMVICYSGII). Topologically, residues 228 to 243 (KTLLRCPNKKKHKAIR) are cytoplasmic. The helical transmembrane segment at 244–268 (LIFVVMIVFFIFWTPYNLVLLFSAF) threads the bilayer. Residues 269–285 (HSTFLETSCQQSKHLDL) lie on the Extracellular side of the membrane. The helical transmembrane segment at 286–309 (AMQVTEVIAYTHCCINPVIYAFVG) threads the bilayer. Residues 310-359 (ERFRKHLRLFFHRNVAVYLGKYIPFLPGEKMERTSSVSPSTGEQEISVVF) lie on the Cytoplasmic side of the membrane.

The protein belongs to the G-protein coupled receptor 1 family. Detected in skeletal muscle and in trace amounts in leukocytes.

It localises to the cell membrane. Receptor for C-C type chemokine. Binds and responds to a variety of chemokines, including CCL11, CCL26, CCL7, CCL13, RANTES(CCL5) and CCL15. Subsequently transduces a signal by increasing the intracellular calcium ions level. In addition acts as a possible functional receptor for NARS1. This is Probable C-C chemokine receptor type 3 (Ccr3) from Mus musculus (Mouse).